The primary structure comprises 200 residues: 6-carboxy-5,6,7,8-tetrahydropterin synthase (200 aa).

Histidine 13 provides a ligand contact to Zn(2+). Cysteine 23 acts as the Proton acceptor in catalysis. Positions 28 and 30 each coordinate Zn(2+). Active-site charge relay system residues include histidine 68 and glutamate 136.

Belongs to the PTPS family. QueD subfamily. It depends on Zn(2+) as a cofactor.

The catalysed reaction is 7,8-dihydroneopterin 3'-triphosphate + H2O = 6-carboxy-5,6,7,8-tetrahydropterin + triphosphate + acetaldehyde + 2 H(+). Its pathway is purine metabolism; 7-cyano-7-deazaguanine biosynthesis. In terms of biological role, catalyzes the conversion of 7,8-dihydroneopterin triphosphate (H2NTP) to 6-carboxy-5,6,7,8-tetrahydropterin (CPH4) and acetaldehyde. This is 6-carboxy-5,6,7,8-tetrahydropterin synthase (queD) from Helicobacter pylori (strain J99 / ATCC 700824) (Campylobacter pylori J99).